A 233-amino-acid chain; its full sequence is Phytol kinase (233 aa).

6 consecutive transmembrane segments (helical) span residues 9–29 (MALP…AVVL), 56–76 (VVLI…AGVF), 96–118 (VGRH…GGFF), 122–144 (LPIF…ALVG), 172–192 (FLVT…VLVV), and 213–233 (NLTV…LWLG).

Belongs to the polyprenol kinase family.

The protein resides in the cell membrane. It carries out the reaction phytol + CTP = phytyl phosphate + CDP + H(+). The protein operates within cofactor biosynthesis; tocopherol biosynthesis. Functionally, catalyzes the CTP-dependent phosphorylation of phytol to phytylmonophosphate (PMP). Can also use UTP as an alternative phosphate donor, but not ATP or GTP. Is involved in tocopherol biosynthesis, via the utilization of phytol generated by chlorophyll degradation. Also plays a significant but not critical role in the recycling of phytol for the biosynthesis of new chlorophyll molecules. The chain is Phytol kinase from Synechocystis sp. (strain ATCC 27184 / PCC 6803 / Kazusa).